The following is a 262-amino-acid chain: Glutamate racemase (262 aa).

Residues 5-6 and 37-38 contribute to the substrate site; these read DS and YG. C69 (proton donor/acceptor) is an active-site residue. Position 70–71 (70–71) interacts with substrate; the sequence is NT. C181 functions as the Proton donor/acceptor in the catalytic mechanism. Residue 182–183 participates in substrate binding; that stretch reads TH.

Belongs to the aspartate/glutamate racemases family.

The enzyme catalyses L-glutamate = D-glutamate. It functions in the pathway cell wall biogenesis; peptidoglycan biosynthesis. Functionally, provides the (R)-glutamate required for cell wall biosynthesis. This Buchnera aphidicola subsp. Acyrthosiphon pisum (strain 5A) protein is Glutamate racemase.